Reading from the N-terminus, the 101-residue chain is MAAISREEVAHLARLSRLAVTEEELDTLAGQLDVILQAVAQVGEVTAADIPPTSHSVPLTNVLRDDVVASCLTPEEALSGAPDAAEQRFRVPRILDEDVAS.

This sequence belongs to the GatC family. In terms of assembly, heterotrimer of A, B and C subunits.

It catalyses the reaction L-glutamyl-tRNA(Gln) + L-glutamine + ATP + H2O = L-glutaminyl-tRNA(Gln) + L-glutamate + ADP + phosphate + H(+). The catalysed reaction is L-aspartyl-tRNA(Asn) + L-glutamine + ATP + H2O = L-asparaginyl-tRNA(Asn) + L-glutamate + ADP + phosphate + 2 H(+). Functionally, allows the formation of correctly charged Asn-tRNA(Asn) or Gln-tRNA(Gln) through the transamidation of misacylated Asp-tRNA(Asn) or Glu-tRNA(Gln) in organisms which lack either or both of asparaginyl-tRNA or glutaminyl-tRNA synthetases. The reaction takes place in the presence of glutamine and ATP through an activated phospho-Asp-tRNA(Asn) or phospho-Glu-tRNA(Gln). The protein is Aspartyl/glutamyl-tRNA(Asn/Gln) amidotransferase subunit C of Salinispora tropica (strain ATCC BAA-916 / DSM 44818 / JCM 13857 / NBRC 105044 / CNB-440).